The primary structure comprises 389 residues: Chalcone synthase (389 aa).

C164 is an active-site residue.

The protein belongs to the thiolase-like superfamily. Chalcone/stilbene synthases family.

It carries out the reaction (E)-4-coumaroyl-CoA + 3 malonyl-CoA + 3 H(+) = 2',4,4',6'-tetrahydroxychalcone + 3 CO2 + 4 CoA. It functions in the pathway secondary metabolite biosynthesis; flavonoid biosynthesis. The primary product of this enzyme is 4,2',4',6'-tetrahydroxychalcone (also termed naringenin-chalcone or chalcone) which can under specific conditions spontaneously isomerize into naringenin. The protein is Chalcone synthase (CHS) of Pueraria montana var. lobata (Kudzu vine).